We begin with the raw amino-acid sequence, 446 residues long: Tubulin beta chain (446 aa).

Residues Gln11, Glu69, Ser138, Gly142, Thr143, Gly144, Asn204, and Asn226 each coordinate GTP. Residue Glu69 participates in Mg(2+) binding. The disordered stretch occupies residues 426–446; it reads QDATAEEEGEYVEDEDEMDGM. A compositionally biased stretch (acidic residues) spans 429 to 446; sequence TAEEEGEYVEDEDEMDGM.

It belongs to the tubulin family. Dimer of alpha and beta chains. A typical microtubule is a hollow water-filled tube with an outer diameter of 25 nm and an inner diameter of 15 nM. Alpha-beta heterodimers associate head-to-tail to form protofilaments running lengthwise along the microtubule wall with the beta-tubulin subunit facing the microtubule plus end conferring a structural polarity. Microtubules usually have 13 protofilaments but different protofilament numbers can be found in some organisms and specialized cells. Mg(2+) serves as cofactor.

Its subcellular location is the cytoplasm. The protein resides in the cytoskeleton. Functionally, tubulin is the major constituent of microtubules, a cylinder consisting of laterally associated linear protofilaments composed of alpha- and beta-tubulin heterodimers. Microtubules grow by the addition of GTP-tubulin dimers to the microtubule end, where a stabilizing cap forms. Below the cap, tubulin dimers are in GDP-bound state, owing to GTPase activity of alpha-tubulin. This chain is Tubulin beta chain, found in Euplotes crassus.